Consider the following 102-residue polypeptide: Large ribosomal subunit protein mL63 (102 aa).

This sequence belongs to the mitochondrion-specific ribosomal protein mL63 family. As to quaternary structure, component of the mitochondrial large ribosomal subunit (mt-LSU). Mature mammalian 55S mitochondrial ribosomes consist of a small (28S) and a large (39S) subunit. The 28S small subunit contains a 12S ribosomal RNA (12S mt-rRNA) and 30 different proteins. The 39S large subunit contains a 16S rRNA (16S mt-rRNA), a copy of mitochondrial valine transfer RNA (mt-tRNA(Val)), which plays an integral structural role, and 52 different proteins.

The protein resides in the mitochondrion. This chain is Large ribosomal subunit protein mL63 (MRPL57), found in Homo sapiens (Human).